The primary structure comprises 912 residues: Probable transmembrane GTPase FZO-like, chloroplastic (912 aa).

A chloroplast-targeting transit peptide spans 1–54; that stretch reads MRTLISHRQCVTSPFLISAASPPFPGRCFKLSSFTPPRHRRFSSLSIRNISHES. The disordered stretch occupies residues 51 to 71; the sequence is SHESADQTSSSRPRTLYPGGY. Over 55 to 773 the chain is Stromal; the sequence is ADQTSSSRPR…SKRLEQDIRE (719 aa). Residues 359–364 and S521 each bind GTP; that span reads NSGKST. The chain crosses the membrane as a helical span at residues 774–794; the sequence is VFFVTVGGLGAAGLSASLLTS. Topologically, residues 795 to 801 are chloroplast intermembrane; the sequence is VLPTTLE. The helical transmembrane segment at 802-822 threads the bilayer; that stretch reads DLLALGLCSAGGYVAIANFPY. Over 823–912 the chain is Stromal; sequence RRQAIIGKVN…LHVSRDEMRL (90 aa). The stretch at 877–904 forms a coiled coil; sequence DRLLGIQKELSDIRSKLQLLQVDIDNLH.

This sequence belongs to the TRAFAC class dynamin-like GTPase superfamily. Dynamin/Fzo/YdjA family. Mitofusin subfamily.

It localises to the plastid. Its subcellular location is the chloroplast inner membrane. It is found in the chloroplast thylakoid membrane. Functionally, probable membrane-remodeling GTPase that plays a unique role in the in the determination of thylakoid and chloroplast morphology and regulates organization of the thylakoid network. Not involved in the determination of mitochondrial morphology or ultrastructure. The chain is Probable transmembrane GTPase FZO-like, chloroplastic from Arabidopsis thaliana (Mouse-ear cress).